Consider the following 293-residue polypeptide: HTH-type transcriptional regulator HdfR (293 aa).

One can recognise an HTH lysR-type domain in the interval 1 to 58 (MDTELLKTFLEVSRTRHFGRAAESLYLTQSAVSFRIRQLENQLGANLFTRHRNNIRLT). The segment at residues 18–37 (FGRAAESLYLTQSAVSFRIR) is a DNA-binding region (H-T-H motif).

This sequence belongs to the LysR transcriptional regulatory family.

Functionally, negatively regulates the transcription of the flagellar master operon flhDC by binding to the upstream region of the operon. This chain is HTH-type transcriptional regulator HdfR, found in Yersinia pseudotuberculosis serotype O:1b (strain IP 31758).